We begin with the raw amino-acid sequence, 152 residues long: MFRGATLVNLDSKGRLAVPTRYREMLYGESQGQMVCTIDLHQPCLLLYPLPEWEIIEQKLSRLSSMNPAERRVQRLLLGHASECQMDSAGRLLIANTLRQHADLKKEVMLVGQFNKFELWDEQTWYQQVKDDIDAEQSTQEPLSERLQDLSL.

SpoVT-AbrB domains follow at residues 5–52 (ATLV…PLPE) and 81–124 (ASEC…DEQT).

Belongs to the MraZ family. In terms of assembly, forms oligomers.

It localises to the cytoplasm. Its subcellular location is the nucleoid. Functionally, negatively regulates its own expression and that of the subsequent genes in the proximal part of the division and cell wall (dcw) gene cluster. Acts by binding directly to DNA. May also regulate the expression of genes outside the dcw cluster. The polypeptide is Transcriptional regulator MraZ (Pectobacterium atrosepticum (strain SCRI 1043 / ATCC BAA-672) (Erwinia carotovora subsp. atroseptica)).